The sequence spans 262 residues: Type III pantothenate kinase (262 aa).

7–14 is an ATP binding site; that stretch reads DIGNTRLK. Substrate-binding positions include tyrosine 96 and 103–106; that span reads GSDR. Residue aspartate 105 is the Proton acceptor of the active site. Threonine 137 is an ATP binding site. Threonine 187 lines the substrate pocket.

Belongs to the type III pantothenate kinase family. As to quaternary structure, homodimer. NH4(+) serves as cofactor. The cofactor is K(+).

The protein resides in the cytoplasm. It carries out the reaction (R)-pantothenate + ATP = (R)-4'-phosphopantothenate + ADP + H(+). It functions in the pathway cofactor biosynthesis; coenzyme A biosynthesis; CoA from (R)-pantothenate: step 1/5. In terms of biological role, catalyzes the phosphorylation of pantothenate (Pan), the first step in CoA biosynthesis. This Leptothrix cholodnii (strain ATCC 51168 / LMG 8142 / SP-6) (Leptothrix discophora (strain SP-6)) protein is Type III pantothenate kinase.